Consider the following 403-residue polypeptide: Protein LAZ1 homolog 2 (403 aa).

The next 6 helical transmembrane spans lie at 16-36, 50-70, 162-182, 191-211, 236-256, and 269-289; these read SLII…YSIL, WIVS…ISLS, MILK…GVYG, GYPY…FCLV, IVFA…YGIL, and FLIC…FPAE. The tract at residues 381–403 is disordered; sequence SDGKEETEVTEEVTVETSVPPKE.

The protein belongs to the TMEM184 family.

Its subcellular location is the membrane. This Arabidopsis thaliana (Mouse-ear cress) protein is Protein LAZ1 homolog 2.